Consider the following 1441-residue polypeptide: Tripeptidyl-peptidase 2 (1441 aa).

Residues 62 to 89 (AESSERSNSSKKTTNKEQSDKSAESRMA) form a disordered region. Basic and acidic residues predominate over residues 75–85 (TNKEQSDKSAE). Positions 107 to 608 (ETGVLNFLQK…HGLLNVEKAF (502 aa)) constitute a Peptidase S8 domain. Residues D131, H359, and S549 each act as charge relay system in the active site. The segment covering 1139 to 1155 (TANGAKPKAPATPQAAT) has biased composition (low complexity). Disordered stretches follow at residues 1139 to 1190 (TANG…KANA) and 1255 to 1274 (QKTSPPEAGESADKQKEDQK). S1182 bears the Phosphoserine mark. Residues 1265-1274 (SADKQKEDQK) show a composition bias toward basic and acidic residues.

Belongs to the peptidase S8 family. As to quaternary structure, homooligomer; forms a complex of 6 MDa probably composed of 40 subunits. Forms a structure consisting of 2 segmented and twisted strands that form a spindle-shaped structure. Each strand is composed of 10 segments (a segment being a homodimer oriented head to head), stacking of these segments leads to the formation of a twisted single strand. 2 strands compose the fully assembled spindle.

Its subcellular location is the cytoplasm. The enzyme catalyses Release of an N-terminal tripeptide from a polypeptide.. With respect to regulation, inhibited by phenylmethanesulfonyl fluoride (PMSF) and butabindide, but not by peptidase inhibitor pepstatin, EDTA, nor bestatin. In terms of biological role, component of the proteolytic cascade acting downstream of the 26S proteasome in the ubiquitin-proteasome pathway. Efficiently cleaves Ala-Ala-Ala-polypeptide and Pro-Pro-Ala-polypeptide, Val-Leu-Lys-polypeptide only at high concentration. Does not cleave Ala-Phe-Pro-polypeptide nor Pro-Leu-Gly-polypeptide. The protein is Tripeptidyl-peptidase 2 (TppII) of Drosophila melanogaster (Fruit fly).